Consider the following 216-residue polypeptide: Probable RNA 2'-phosphotransferase 2 (216 aa).

It belongs to the KptA/TPT1 family.

In terms of biological role, removes the 2'-phosphate from RNA via an intermediate in which the phosphate is ADP-ribosylated by NAD followed by a presumed transesterification to release the RNA and generate ADP-ribose 1''-2''-cyclic phosphate (APPR&gt;P). May function as an ADP-ribosylase. The polypeptide is Probable RNA 2'-phosphotransferase 2 (kptA2) (Archaeoglobus fulgidus (strain ATCC 49558 / DSM 4304 / JCM 9628 / NBRC 100126 / VC-16)).